The sequence spans 364 residues: tRNA-specific 2-thiouridylase MnmA (364 aa).

Residues 6-13 (AMSGGVDS) and Leu32 each bind ATP. Cys101 (nucleophile) is an active-site residue. The cysteines at positions 101 and 193 are disulfide-linked. Gly125 provides a ligand contact to ATP. The tract at residues 143–145 (KDQ) is interaction with tRNA. Residue Cys193 is the Cysteine persulfide intermediate of the active site.

Belongs to the MnmA/TRMU family.

The protein localises to the cytoplasm. The catalysed reaction is S-sulfanyl-L-cysteinyl-[protein] + uridine(34) in tRNA + AH2 + ATP = 2-thiouridine(34) in tRNA + L-cysteinyl-[protein] + A + AMP + diphosphate + H(+). Catalyzes the 2-thiolation of uridine at the wobble position (U34) of tRNA, leading to the formation of s(2)U34. The sequence is that of tRNA-specific 2-thiouridylase MnmA from Rhodococcus jostii (strain RHA1).